The primary structure comprises 329 residues: MSTSGTFFADNSQTIGKTPLVRLNRIVKGAPATVLAKIEGRNPAYSVKCRIGAAMIWDAEQRGLLGPGKELIEPTSGNTGIALAFVAAARGIPLTLTMPETMSLERRKLLAAYGAKLVLTEGVKGMTGAVRRAEDIAASDPDRYVLLQQFRNPANPAIHEQTTGPEIWEDTGGAIDILVSGVGTGGTITGVSRYIKQTQGKPILSVAVEPEASPVISQQRSGLPLKPGPHKIQGIGAGFIPENLDLSLVDQVERVSNEEAIAYARRLAQEEGLISGISCGAAVAAAVRLAQQSEHAGKTIVVVLPDSGERYLSTALFDGIFNEQGLAVV.

At K48 the chain carries N6-(pyridoxal phosphate)lysine. Pyridoxal 5'-phosphate-binding positions include N78, 183–187, and S278; that span reads GTGGT.

It belongs to the cysteine synthase/cystathionine beta-synthase family. In terms of assembly, homodimer. Pyridoxal 5'-phosphate serves as cofactor.

The enzyme catalyses O-acetyl-L-serine + hydrogen sulfide = L-cysteine + acetate. It participates in amino-acid biosynthesis; L-cysteine biosynthesis; L-cysteine from L-serine: step 2/2. Its function is as follows. Catalyzes the conversion of O-acetylserine (OAS) to cysteine through the elimination of acetate and addition of hydrogen sulfide. This chain is Cysteine synthase (srpG), found in Synechococcus elongatus (strain ATCC 33912 / PCC 7942 / FACHB-805) (Anacystis nidulans R2).